Consider the following 65-residue polypeptide: Large ribosomal subunit protein uL29 (65 aa).

The protein belongs to the universal ribosomal protein uL29 family.

The chain is Large ribosomal subunit protein uL29 from Lactobacillus delbrueckii subsp. bulgaricus (strain ATCC 11842 / DSM 20081 / BCRC 10696 / JCM 1002 / NBRC 13953 / NCIMB 11778 / NCTC 12712 / WDCM 00102 / Lb 14).